The following is a 487-amino-acid chain: Probable cytochrome P450 516A1 (487 aa).

A helical membrane pass occupies residues 1–21 (MIILLLSIIIFILYIVKIFKN). Heme is bound at residue Cys434.

The protein belongs to the cytochrome P450 family. The cofactor is heme.

It is found in the membrane. The protein is Probable cytochrome P450 516A1 (cyp516A1) of Dictyostelium discoideum (Social amoeba).